The following is a 420-amino-acid chain: Serine hydroxymethyltransferase (420 aa).

(6S)-5,6,7,8-tetrahydrofolate-binding positions include Leu121 and 125-127; that span reads GHL. N6-(pyridoxal phosphate)lysine is present on Lys229.

It belongs to the SHMT family. In terms of assembly, homodimer. It depends on pyridoxal 5'-phosphate as a cofactor.

It localises to the cytoplasm. It catalyses the reaction (6R)-5,10-methylene-5,6,7,8-tetrahydrofolate + glycine + H2O = (6S)-5,6,7,8-tetrahydrofolate + L-serine. It functions in the pathway one-carbon metabolism; tetrahydrofolate interconversion. Its pathway is amino-acid biosynthesis; glycine biosynthesis; glycine from L-serine: step 1/1. Its function is as follows. Catalyzes the reversible interconversion of serine and glycine with tetrahydrofolate (THF) serving as the one-carbon carrier. This reaction serves as the major source of one-carbon groups required for the biosynthesis of purines, thymidylate, methionine, and other important biomolecules. Also exhibits THF-independent aldolase activity toward beta-hydroxyamino acids, producing glycine and aldehydes, via a retro-aldol mechanism. The chain is Serine hydroxymethyltransferase from Wigglesworthia glossinidia brevipalpis.